The following is a 350-amino-acid chain: Peroxidase 10 (350 aa).

An N-terminal signal peptide occupies residues 1–27 (MDHKMSMYLFVSYLAIFTLFFKGFVSS). 4 cysteine pairs are disulfide-bonded: C57–C137, C90–C95, C143–C346, and C222–C256. H88 functions as the Proton acceptor in the catalytic mechanism. 5 residues coordinate Ca(2+): D89, V92, G94, D96, and S98. Residue N102 is glycosylated (N-linked (GlcNAc...) asparagine). Residue P185 participates in substrate binding. N-linked (GlcNAc...) asparagine glycosylation is present at N193. Residue H215 participates in heme b binding. Position 216 (T216) interacts with Ca(2+). Positions 270, 273, and 278 each coordinate Ca(2+).

Belongs to the peroxidase family. Classical plant (class III) peroxidase subfamily. Heme b serves as cofactor. It depends on Ca(2+) as a cofactor. As to expression, expressed in the whole plant, with the highest expression in roots.

Its subcellular location is the secreted. The catalysed reaction is 2 a phenolic donor + H2O2 = 2 a phenolic radical donor + 2 H2O. In terms of biological role, removal of H(2)O(2), oxidation of toxic reductants, biosynthesis and degradation of lignin, suberization, auxin catabolism, response to environmental stresses such as wounding, pathogen attack and oxidative stress. These functions might be dependent on each isozyme/isoform in each plant tissue. The chain is Peroxidase 10 (PER10) from Arabidopsis thaliana (Mouse-ear cress).